Here is a 252-residue protein sequence, read N- to C-terminus: 3-dehydroquinate dehydratase (252 aa).

Residues Ser-21, 46–48 (EWR), and Arg-82 each bind 3-dehydroquinate. Catalysis depends on His-143, which acts as the Proton donor/acceptor. Lys-170 (schiff-base intermediate with substrate) is an active-site residue. 3-dehydroquinate-binding residues include Arg-213, Ser-232, and Gln-236.

This sequence belongs to the type-I 3-dehydroquinase family. Homodimer.

It catalyses the reaction 3-dehydroquinate = 3-dehydroshikimate + H2O. It functions in the pathway metabolic intermediate biosynthesis; chorismate biosynthesis; chorismate from D-erythrose 4-phosphate and phosphoenolpyruvate: step 3/7. Its function is as follows. Involved in the third step of the chorismate pathway, which leads to the biosynthesis of aromatic amino acids. Catalyzes the cis-dehydration of 3-dehydroquinate (DHQ) and introduces the first double bond of the aromatic ring to yield 3-dehydroshikimate. The chain is 3-dehydroquinate dehydratase from Escherichia coli (strain SE11).